Consider the following 428-residue polypeptide: Adenylosuccinate synthetase (428 aa).

Residues glycine 12–lysine 18 and glycine 40–threonine 42 contribute to the GTP site. Aspartate 13 functions as the Proton acceptor in the catalytic mechanism. The Mg(2+) site is built by aspartate 13 and glycine 40. Residues aspartate 13–lysine 16, asparagine 38–histidine 41, threonine 128, arginine 142, glutamine 223, threonine 238, and arginine 302 contribute to the IMP site. Histidine 41 functions as the Proton donor in the catalytic mechanism. Residue valine 298–arginine 304 participates in substrate binding. GTP is bound by residues arginine 304, lysine 330–aspartate 332, and glycine 412–glycine 414.

The protein belongs to the adenylosuccinate synthetase family. As to quaternary structure, homodimer. It depends on Mg(2+) as a cofactor.

It is found in the cytoplasm. It carries out the reaction IMP + L-aspartate + GTP = N(6)-(1,2-dicarboxyethyl)-AMP + GDP + phosphate + 2 H(+). It participates in purine metabolism; AMP biosynthesis via de novo pathway; AMP from IMP: step 1/2. In terms of biological role, plays an important role in the de novo pathway of purine nucleotide biosynthesis. Catalyzes the first committed step in the biosynthesis of AMP from IMP. This chain is Adenylosuccinate synthetase, found in Cutibacterium acnes (strain DSM 16379 / KPA171202) (Propionibacterium acnes).